The chain runs to 250 residues: Histone H1.1 (250 aa).

Residues 1–11 (MSDSAVATSAS) show a composition bias toward polar residues. Disordered stretches follow at residues 1–52 (MSDS…QQMV) and 104–250 (QTKG…ATKK). In terms of domain architecture, H15 spans 44 to 118 (SHPPTQQMVD…GASGSFKLSA (75 aa)). The span at 122–133 (KDAKPKASAVEK) shows a compositional bias: basic and acidic residues. A compositionally biased stretch (low complexity) spans 140–161 (ASAARATKSKSSTSTTKKAAGA). The span at 174–191 (KNVEKKKADKEKAKDAKK) shows a compositional bias: basic and acidic residues. Residues 192–234 (TGTIKAKPTTAKAKSSATKPKTPKPKTTSAKPKKVVSATTPKK) show a composition bias toward low complexity. Positions 235 to 250 (TAVKKPKAKTASATKK) are enriched in basic residues.

It belongs to the histone H1/H5 family.

The protein localises to the nucleus. It localises to the chromosome. In terms of biological role, histones H1 are necessary for the condensation of nucleosome chains into higher-order structures. In Drosophila virilis (Fruit fly), this protein is Histone H1.1 (His1.1).